Reading from the N-terminus, the 308-residue chain is Palmitoyltransferase ZDHHC7 (308 aa).

Residues 1–50 (MQPSGHRLRDIEHHPLLTDNDNYDSASSSSSEADMADRVWFIRDGCGMVC) lie on the Cytoplasmic side of the membrane. The chain crosses the membrane as a helical span at residues 51–71 (AVMTWLLVVYADFVVTFVMLL). Residues 72-75 (PSKD) lie on the Lumenal side of the membrane. A helical transmembrane segment spans residues 76 to 96 (FWYSVVNGVLFNCLAVLALSS). Residues 97 to 173 (HLRTMLTDPG…NNCVGEKNQR (77 aa)) lie on the Cytoplasmic side of the membrane. A DHHC domain is found at 130–180 (YKCPKCCCIKPERAHHCSICKRCIRKMDHHCPWVNNCVGEKNQRFFVLFTM). Cys160 serves as the catalytic S-palmitoyl cysteine intermediate. Residues 174–194 (FFVLFTMYIALSSIHALILCG) form a helical membrane-spanning segment. The Lumenal portion of the chain corresponds to 195–217 (LQFISCVRGQWTECSDFSPPITV). A helical membrane pass occupies residues 218 to 238 (ILLVFLCLEGLLFFTFTAVMF). The Cytoplasmic portion of the chain corresponds to 239-308 (GTQIHSICND…TRKGGPEFSV (70 aa)).

This sequence belongs to the DHHC palmitoyltransferase family. In terms of assembly, homooligomers. Heterooligomers with ZDHHC3. Autopalmitoylated. In terms of tissue distribution, widely expressed. Present in Sertoli cells (at protein level).

It localises to the golgi apparatus membrane. It carries out the reaction L-cysteinyl-[protein] + hexadecanoyl-CoA = S-hexadecanoyl-L-cysteinyl-[protein] + CoA. The catalysed reaction is L-cysteinyl-[protein] + tetradecanoyl-CoA = S-tetradecanoyl-L-cysteinyl-[protein] + CoA. The enzyme catalyses L-cysteinyl-[protein] + octadecanoyl-CoA = S-octadecanoyl-L-cysteinyl-[protein] + CoA. In terms of biological role, golgi-localized palmitoyltransferase that catalyzes the addition of palmitate onto various protein substrates and therefore functions in several unrelated biological processes. Has no stringent fatty acid selectivity and in addition to palmitate can also transfer onto target proteins myristate from tetradecanoyl-CoA and stearate from octadecanoyl-CoA. Palmitoylates sex steroid hormone receptors, including ESR1, PGR and AR, thereby regulating their targeting to the plasma membrane and their function in rapid intracellular signaling upon binding of sex hormones. Palmitoylates GNAQ, a heterotrimeric G protein, regulating its dynamic localization at the plasma membrane and is thereby involved in GNAQ-dependent G protein-coupled receptor signaling pathways. Also functions in ligand-induced cell death by regulating the FAS signaling pathway through the palmitoylation and stabilization of the receptor at the plasma membrane. In epithelial cells, palmitoylates SCRIB and regulates its localization to the plasma membrane, regulating indirectly cell polarity and differentiation. Also palmitoylates JAM3 and promotes its expression at tight junctions and regulates its function in cell migration. Palmitoylates the glucose transporter GLUT4/SLC2A4 and controls the insulin-dependent translocation of GLUT4 to the plasma membrane. In brain, could also palmitoylate SNAP25 and DLG4/PSD95. Could also palmitoylate DNAJC5 and regulate its localization to the Golgi membrane. Could also palmitoylate NCDN. May play a role in follicle stimulation hormone (FSH) activation of testicular Sertoli cells. Activates pyroptosis by catalyzing palmitoylation of gasdermin-D (GSDMD). In Rattus norvegicus (Rat), this protein is Palmitoyltransferase ZDHHC7.